Consider the following 918-residue polypeptide: Signal transduction histidine-protein kinase BarA (918 aa).

The Cytoplasmic portion of the chain corresponds to 1-10 (MTNYSLRARM). The chain crosses the membrane as a helical span at residues 11–31 (MILILAPTVLIGLLLSIFFVV). The Periplasmic segment spans residues 32–175 (HRYNDLQRQL…LKSVRLQQYK (144 aa)). The helical transmembrane segment at 176 to 196 (EIFISCVMMLFCIGIALIFGW) threads the bilayer. Topologically, residues 197–918 (RLMRDVTGPI…VAREASKILG (722 aa)) are cytoplasmic. Residues 200–252 (RDVTGPIRNMVNTVDRIRRGQLDSRVEGFMLGELDMLKNGINSMAMSLAAYHE) enclose the HAMP domain. Positions 299–520 (NMSHELRTPL…TFWFHINLDL (222 aa)) constitute a Histidine kinase domain. Phosphohistidine; by autocatalysis is present on His302. The 117-residue stretch at 669–785 (TVMAVDDNPA…RLHNLLLRYK (117 aa)) folds into the Response regulatory domain. Asp718 carries the 4-aspartylphosphate modification. In terms of domain architecture, HPt spans 822–918 (KTDLARDMLQ…VAREASKILG (97 aa)). Phosphohistidine is present on His861.

Activation requires a sequential transfer of a phosphate group from a His in the primary transmitter domain, to an Asp in the receiver domain and to a His in the secondary transmitter domain.

It localises to the cell inner membrane. The catalysed reaction is ATP + protein L-histidine = ADP + protein N-phospho-L-histidine.. In terms of biological role, member of the two-component regulatory system UvrY/BarA involved in the regulation of carbon metabolism via the CsrA/CsrB regulatory system. Phosphorylates UvrY, probably via a four-step phosphorelay. The polypeptide is Signal transduction histidine-protein kinase BarA (barA) (Shigella flexneri).